The sequence spans 229 residues: Ion-translocating oxidoreductase complex subunit E (229 aa).

A run of 5 helical transmembrane segments spans residues Leu-58–Phe-78, Ile-82–Ile-102, Leu-105–Val-125, Ala-147–Ile-167, and Gly-201–Val-221.

Belongs to the NqrDE/RnfAE family. The complex is composed of six subunits: RnfA, RnfB, RnfC, RnfD, RnfE and RnfG.

The protein resides in the cell inner membrane. Functionally, part of a membrane-bound complex that couples electron transfer with translocation of ions across the membrane. The polypeptide is Ion-translocating oxidoreductase complex subunit E (Glaesserella parasuis serovar 5 (strain SH0165) (Haemophilus parasuis)).